The chain runs to 310 residues: Protoheme IX farnesyltransferase 2 (310 aa).

Helical transmembrane passes span 25–45 (PGIIFGNLISVAGGFLLAAKG), 49–69 (LVLMLASLVGLSLVVASGCAI), 98–118 (HVLLFGIALGVLGFGILALFT), 121–141 (LALLFAAIGYVVYVGIYSLYM), 145–165 (SVYGTLVGSFSGAVPPVVGYC), 176–196 (VILLLMFSLWQMPHSYAIAIF), 222–242 (IVLYIAVFALVSTMLPLAGYT), 245–265 (AFMAVTCATSLWWLTMALKGY), and 277–297 (QVFGFSIITITALSVTMALDF).

Belongs to the UbiA prenyltransferase family. Protoheme IX farnesyltransferase subfamily.

The protein localises to the cell inner membrane. It catalyses the reaction heme b + (2E,6E)-farnesyl diphosphate + H2O = Fe(II)-heme o + diphosphate. It functions in the pathway porphyrin-containing compound metabolism; heme O biosynthesis; heme O from protoheme: step 1/1. In terms of biological role, converts heme B (protoheme IX) to heme O by substitution of the vinyl group on carbon 2 of heme B porphyrin ring with a hydroxyethyl farnesyl side group. The chain is Protoheme IX farnesyltransferase 2 from Shewanella sp. (strain ANA-3).